Consider the following 2896-residue polypeptide: 3'-5' exoribonuclease HELZ2 (2896 aa).

2 consecutive C3H1-type zinc fingers follow at residues 90–114 (VCHY…RSRE) and 217–246 (GQPP…HSAV). Residues 287–311 (LYCPACLVTCHSQEAFENHCASSEH) form a C2H2-type; atypical zinc finger. The C3H1-type 3 zinc finger occupies 327-357 (SPPPGLSKFELCPKPDLCEYGDACTKAHSAQ). Residues 770 to 1126 (VALIAGWGPG…VVLSTVHTCQ (357 aa)) form the UvrD-like helicase ATP-binding domain. ATP is bound at residue 791–798 (GPFGTGKT). Residues 810 to 1306 (RRPETKVLIC…ESTEAEDAEA (497 aa)) form an interaction with THRAP3 region. A DEAA box motif is present at residues 914–917 (DEAA). A Phosphoserine modification is found at Ser-1253. 3 consecutive short sequence motifs (LXXLL motif) follow at residues 1322 to 1326 (LRELL), 1365 to 1369 (LRKLL), and 1420 to 1424 (LVQLL). An RNB domain is found at 1581–1938 (REDCRAFLTF…VLQRQILLAL (358 aa)). Residues 2259–2263 (LEGLP) carry the LXXLL motif 4 motif. The interaction with THRAP3 stretch occupies residues 2382 to 2896 (PSRFLERQTY…RVCRRPTMPS (515 aa)). The region spanning 2400–2675 (LNPSQNVAVR…HMLDTQYRMH (276 aa)) is the UvrD-like helicase ATP-binding 2 domain. Residue 2421 to 2428 (GPPGTGKT) participates in ATP binding. Positions 2476–2480 (LAGLL) match the LXXLL motif 5 motif.

It belongs to the DNA2/NAM7 helicase family. As to quaternary structure, interacts with PPARA (via DNA-binding domain) and PPARG; the interaction stimulates the transcriptional activity of PPARA and PPARG. Interacts with THRAP3; the interaction is direct and HELZ2 and THRAP3 synergistically enhance the transcriptional activity of PPARG. It is probably part of the peroxisome proliferator activated receptor alpha interacting complex (PRIC). As to expression, expressed in various tissues including heart, pancreas, skeletal muscle, colon, spleen, liver, kidney, lung, peripheral blood and placenta.

It is found in the cytoplasm. It catalyses the reaction Exonucleolytic cleavage in the 3'- to 5'-direction to yield nucleoside 5'-phosphates.. The catalysed reaction is ATP + H2O = ADP + phosphate + H(+). Can degrade highly structured RNAs through its concerted ATP-dependent RNA helicase and 3' to 5' exoribonuclease activities. Shows a strong preference for pyrimidine over purine residues for its nuclease activity. Acts as a transcriptional coactivator for a number of nuclear receptors including PPARA, PPARG, THRA, THRB and RXRA. This chain is 3'-5' exoribonuclease HELZ2, found in Homo sapiens (Human).